A 330-amino-acid chain; its full sequence is (11Z)-hexadec-11-enoyl-CoA conjugase (330 aa).

The next 2 helical transmembrane spans lie at 37 to 57 (IVVM…YGLY) and 65 to 85 (LATS…ITAG). Positions 87 to 92 (HRLWSH) match the Histidine box-1 motif. A helical membrane pass occupies residues 101-121 (LEILLMVFNSIAFQNTIFTWV). The Histidine box-2 motif lies at 124–128 (HRLHH). The next 2 helical transmembrane spans lie at 185-205 (AIPF…MYFW) and 216-238 (TVLR…HLWG). The short motif at 264–268 (HNYHH) is the Histidine box-3 element.

The protein belongs to the fatty acid desaturase type 1 family. Requires Fe(2+) as cofactor. Highly expressed in the pheromone gland.

Its subcellular location is the membrane. The catalysed reaction is an 11,12-saturated fatty acyl-CoA + 2 Fe(II)-[cytochrome b5] + O2 + 2 H(+) = an (11Z)-Delta(11)-fatty acyl-CoA + 2 Fe(III)-[cytochrome b5] + 2 H2O. The enzyme catalyses (11Z)-hexadecenoyl-CoA + AH2 + O2 = (10E,12Z)-hexadecadienoyl-CoA + A + 2 H2O. In terms of biological role, fatty acid desaturase that catalyzes 2 consecutive steps in the biosynthesis of bombykol, a sex pheromone produced by the moth. First acts as an acyl-CoA Delta(11) desaturase (1) by catalyzing the formation of Delta(11) fatty acyl precursors. Then acts as a (11Z)-hexadec-11-enoyl-CoA conjugase (2) by converting a single cis double bond at position 11 of (11Z)-hexadec-11-enoyl-CoA into conjugated 10 trans and 12 cis double bonds. The protein is (11Z)-hexadec-11-enoyl-CoA conjugase of Bombyx mori (Silk moth).